The sequence spans 362 residues: Phosphoserine aminotransferase (362 aa).

L-glutamate contacts are provided by Ser-9 and Arg-42. Pyridoxal 5'-phosphate contacts are provided by residues 76–77 (GR), Trp-102, Thr-153, Asp-174, and Gln-197. Lys-198 is modified (N6-(pyridoxal phosphate)lysine). 239 to 240 (NT) serves as a coordination point for pyridoxal 5'-phosphate.

This sequence belongs to the class-V pyridoxal-phosphate-dependent aminotransferase family. SerC subfamily. Homodimer. Requires pyridoxal 5'-phosphate as cofactor.

It is found in the cytoplasm. It carries out the reaction O-phospho-L-serine + 2-oxoglutarate = 3-phosphooxypyruvate + L-glutamate. The enzyme catalyses 4-(phosphooxy)-L-threonine + 2-oxoglutarate = (R)-3-hydroxy-2-oxo-4-phosphooxybutanoate + L-glutamate. Its pathway is amino-acid biosynthesis; L-serine biosynthesis; L-serine from 3-phospho-D-glycerate: step 2/3. It participates in cofactor biosynthesis; pyridoxine 5'-phosphate biosynthesis; pyridoxine 5'-phosphate from D-erythrose 4-phosphate: step 3/5. Functionally, catalyzes the reversible conversion of 3-phosphohydroxypyruvate to phosphoserine and of 3-hydroxy-2-oxo-4-phosphonooxybutanoate to phosphohydroxythreonine. The sequence is that of Phosphoserine aminotransferase from Escherichia coli O7:K1 (strain IAI39 / ExPEC).